The sequence spans 485 residues: UDP-glycosyltransferase 71B2 (485 aa).

Residues Ser287, 354–356, 371–379, and 393–396 each bind UDP-alpha-D-glucose; these read APQ, HCGWNSTLE, and YAEQ.

This sequence belongs to the UDP-glycosyltransferase family.

In terms of biological role, glucosyltransferase that glucosylates the cell wall inhibitor hypostatin in vivo to form a bioactive glucoside. The polypeptide is UDP-glycosyltransferase 71B2 (UGT71B2) (Arabidopsis thaliana (Mouse-ear cress)).